A 483-amino-acid polypeptide reads, in one-letter code: Succinate semialdehyde dehydrogenase (483 aa).

NAD(+)-binding positions include 156–157 (WN), 180–183 (KPAP), and 233–234 (GS). Glu255 acts as the Proton acceptor in catalysis. Residue Leu256 coordinates NAD(+). Cys289 functions as the Nucleophile in the catalytic mechanism. Glu386 is an NAD(+) binding site.

This sequence belongs to the aldehyde dehydrogenase family. In terms of assembly, homotetramer.

The catalysed reaction is succinate semialdehyde + NAD(+) + H2O = succinate + NADH + 2 H(+). Involved in the degradation of the pyridine ring of trigonelline (TG; N-methylnicotinate) into succinate and methylamine as carbon and nitrogen sources, respectively. Catalyzes the NAD(+)-dependent oxidation of succinate semialdehyde to succinate. In Acinetobacter baylyi (strain ATCC 33305 / BD413 / ADP1), this protein is Succinate semialdehyde dehydrogenase.